The primary structure comprises 420 residues: Histidine--tRNA ligase (420 aa).

This sequence belongs to the class-II aminoacyl-tRNA synthetase family. In terms of assembly, homodimer.

The protein localises to the cytoplasm. The catalysed reaction is tRNA(His) + L-histidine + ATP = L-histidyl-tRNA(His) + AMP + diphosphate + H(+). This chain is Histidine--tRNA ligase, found in Ureaplasma parvum serovar 3 (strain ATCC 27815 / 27 / NCTC 11736).